A 478-amino-acid polypeptide reads, in one-letter code: Leukotoxin secretion protein D (478 aa).

Residues 1–77 are Cytoplasmic-facing; the sequence is MKIWLSGIYE…LAVAIVLASV (77 aa). A helical transmembrane segment spans residues 78-98; sequence SKVEIVATAPGKLTFSGRSKE. Topologically, residues 99 to 478 are periplasmic; it reads IKPIENTIVQ…ESVTESLRER (380 aa).

This sequence belongs to the membrane fusion protein (MFP) (TC 8.A.1) family.

It localises to the cell inner membrane. Involved in the transport of the Leukotoxin. This is Leukotoxin secretion protein D (lktD) from Pasteurella haemolytica-like sp. (strain 5943B).